We begin with the raw amino-acid sequence, 165 residues long: Pyruvoyl-dependent arginine decarboxylase 1 (165 aa).

At Ser-45 the chain carries Pyruvic acid (Ser).

This sequence belongs to the PdaD family. Requires pyruvate as cofactor.

It carries out the reaction L-arginine + H(+) = agmatine + CO2. The polypeptide is Pyruvoyl-dependent arginine decarboxylase 1 (pdaD1) (Methanosarcina acetivorans (strain ATCC 35395 / DSM 2834 / JCM 12185 / C2A)).